A 490-amino-acid polypeptide reads, in one-letter code: UDP-glycosyltransferase 86A1 (490 aa).

UDP-alpha-D-glucose-binding positions include S294, 352 to 354, 369 to 377, and 391 to 394; these read CCQ, HCGWNSILE, and LTDQ.

This sequence belongs to the UDP-glycosyltransferase family.

This Arabidopsis thaliana (Mouse-ear cress) protein is UDP-glycosyltransferase 86A1 (UGT86A1).